The sequence spans 355 residues: Receptor-like serine/threonine-protein kinase At1g78530 (355 aa).

Over Met-1–Thr-8 the chain is Extracellular. Residues Phe-9–Phe-29 form a helical membrane-spanning segment. Residues Tyr-30–Phe-355 are Cytoplasmic-facing. The region spanning Leu-75–Ile-347 is the Protein kinase domain. ATP contacts are provided by residues Leu-81–Val-89 and Lys-103. A Phosphotyrosine modification is found at Tyr-148. The active-site Proton acceptor is Asp-197. Phosphoserine is present on residues Ser-201 and Ser-230. Thr-231 and Thr-236 each carry phosphothreonine. At Tyr-244 the chain carries Phosphotyrosine.

This sequence belongs to the protein kinase superfamily. Ser/Thr protein kinase family.

The protein localises to the cell membrane. It catalyses the reaction L-seryl-[protein] + ATP = O-phospho-L-seryl-[protein] + ADP + H(+). It carries out the reaction L-threonyl-[protein] + ATP = O-phospho-L-threonyl-[protein] + ADP + H(+). In Arabidopsis thaliana (Mouse-ear cress), this protein is Receptor-like serine/threonine-protein kinase At1g78530.